Consider the following 427-residue polypeptide: Tol-Pal system protein TolB (427 aa).

Residues methionine 1–alanine 23 form the signal peptide.

Belongs to the TolB family. The Tol-Pal system is composed of five core proteins: the inner membrane proteins TolA, TolQ and TolR, the periplasmic protein TolB and the outer membrane protein Pal. They form a network linking the inner and outer membranes and the peptidoglycan layer.

Its subcellular location is the periplasm. In terms of biological role, part of the Tol-Pal system, which plays a role in outer membrane invagination during cell division and is important for maintaining outer membrane integrity. The chain is Tol-Pal system protein TolB from Actinobacillus succinogenes (strain ATCC 55618 / DSM 22257 / CCUG 43843 / 130Z).